Consider the following 69-residue polypeptide: U2-agatoxin-Ao1z (69 aa).

The N-terminal stretch at 1 to 20 is a signal peptide; that stretch reads MRAIISLLLISAMVFSMIEA. The propeptide occupies 21–34; it reads VPVEEGLQLFEGER. 3 disulfide bridges follow: Cys37–Cys53, Cys44–Cys58, and Cys52–Cys68.

The protein belongs to the neurotoxin 01 (U2-agtx) family. In terms of tissue distribution, expressed by the venom gland.

It is found in the secreted. Its function is as follows. Insect active toxin causing rapid but reversible paralysis in crickets. No activity shown in mammals. Does not show effect on mammalian voltage-gated calcium channels. The sequence is that of U2-agatoxin-Ao1z from Agelena orientalis (Funnel-web spider).